The following is an 817-amino-acid chain: DNA-directed RNA polymerase subunit beta'' (817 aa).

4 residues coordinate Zn(2+): C219, C291, C298, and C301.

Belongs to the RNA polymerase beta' chain family. RpoC2 subfamily. As to quaternary structure, in plastids the minimal PEP RNA polymerase catalytic core is composed of four subunits: alpha, beta, beta', and beta''. When a (nuclear-encoded) sigma factor is associated with the core the holoenzyme is formed, which can initiate transcription. Zn(2+) serves as cofactor.

It localises to the plastid. The enzyme catalyses RNA(n) + a ribonucleoside 5'-triphosphate = RNA(n+1) + diphosphate. DNA-dependent RNA polymerase catalyzes the transcription of DNA into RNA using the four ribonucleoside triphosphates as substrates. The protein is DNA-directed RNA polymerase subunit beta'' (rpoC2) of Euglena longa (Euglenophycean alga).